We begin with the raw amino-acid sequence, 348 residues long: Protein RecA (348 aa).

66–73 is a binding site for ATP; the sequence is GPESSGKT.

This sequence belongs to the RecA family.

The protein localises to the cytoplasm. In terms of biological role, can catalyze the hydrolysis of ATP in the presence of single-stranded DNA, the ATP-dependent uptake of single-stranded DNA by duplex DNA, and the ATP-dependent hybridization of homologous single-stranded DNAs. It interacts with LexA causing its activation and leading to its autocatalytic cleavage. In Neisseria meningitidis serogroup B (strain ATCC BAA-335 / MC58), this protein is Protein RecA.